A 141-amino-acid chain; its full sequence is Hemoglobin subunit alpha-1/2 (141 aa).

Residues 1–141 form the Globin domain; that stretch reads VLSPADKKNV…VSTVLTSKYR (141 aa). S3 is modified (phosphoserine). 2 positions are modified to N6-succinyllysine: K7 and K11. K16 is modified (N6-acetyllysine; alternate). K16 is subject to N6-succinyllysine; alternate. Y24 bears the Phosphotyrosine mark. Position 35 is a phosphoserine (S35). K40 is modified (N6-succinyllysine). At S49 the chain carries Phosphoserine. H58 is an O2 binding site. H87 lines the heme b pocket. A Phosphoserine modification is found at S102. T108 is subject to Phosphothreonine. A phosphoserine mark is found at S124 and S131. 2 positions are modified to phosphothreonine: T134 and T137. Phosphoserine is present on S138.

Belongs to the globin family. In terms of assembly, heterotetramer of two alpha chains and two beta chains. In terms of tissue distribution, red blood cells.

In terms of biological role, involved in oxygen transport from the lung to the various peripheral tissues. This chain is Hemoglobin subunit alpha-1/2, found in Mandrillus sphinx (Mandrill).